We begin with the raw amino-acid sequence, 104 residues long: Chromogranin-A (104 aa).

A disulfide bridge links Cys-17 with Cys-38.

This sequence belongs to the chromogranin/secretogranin protein family. Dimer.

It is found in the cytoplasmic vesicle. The protein resides in the secretory vesicle. Its subcellular location is the secreted. In terms of biological role, chromogranin A probably has a paracrine role in the regulation of secretion or maturation. The protein is Chromogranin-A (CHGA) of Struthio camelus (Common ostrich).